The primary structure comprises 101 residues: U-scoloptoxin(10)-Sm2a (101 aa).

An N-terminal signal peptide occupies residues 1 to 23 (MNKSMIILCAVLFLTYIIEENEA).

The protein belongs to the scoloptoxin-10 family. Post-translationally, contains 3 disulfide bonds. As to expression, expressed by the venom gland.

Its subcellular location is the secreted. This is U-scoloptoxin(10)-Sm2a from Scolopendra morsitans (Tanzanian blue ringleg centipede).